Here is a 292-residue protein sequence, read N- to C-terminus: MAASTMSIRSSAYSDSWQVDDCPESCCEPPCCATSCCAPAPCLTLVCTPVSRVSSPCCQVTCEPSPCQSGCTSSCTPSCCQQSSCQPAYCTSSPCQQACCVPVCCKPVCCVPVCCGASSCCQQSSYQPACCASSSCQPACCVPVCCKPVCCAPTCSEDSYSCCQQSSCQPACCTSSPCQQSYCVPVCCKPVCCKPICCVPVCSGASSLCCQQSGCQPACCTTSCCRPSSSVSLLCRPVCRPACCVPVSSCCAPTSSRQPSYCRQASCVSLLCRPVCSRPACYSFSSGQKSSC.

25 repeat units span residues 26–30 (CCEPP), 31–35 (CCATS), 36–40 (CCAPA), 57–61 (CCQVT), 79–83 (CCQQS), 99–103 (CCVPV), 104–108 (CCKPV), 109–113 (CCVPV), 114–118 (CCGAS), 120–124 (CCQQS), 130–134 (CCASS), 140–144 (CCVPV), 145–149 (CCKPV), 150–154 (CCAPT), 162–166 (CCQQS), 172–176 (CCTSS), 182–186 (YCVPV), 187–191 (CCKPV), 192–196 (CCKPI), 197–201 (CCVPV), 209–213 (CCQQS), 219–223 (CCTTS), 224–228 (CCRPS), 243–247 (CCVPV), and 250–254 (CCAPT). The 25 X 5 AA repeats of C-C-X(3) stretch occupies residues 26–254 (CCEPPCCATS…VPVSSCCAPT (229 aa)).

It belongs to the KRTAP type 10 family. In terms of assembly, interacts with hair keratins. As to expression, restricted to a narrow region of the hair fiber cuticle, lying approximately 20 cell layers above the apex of the dermal papilla of the hair root; not detected in any other tissues.

In terms of biological role, in the hair cortex, hair keratin intermediate filaments are embedded in an interfilamentous matrix, consisting of hair keratin-associated proteins (KRTAP), which are essential for the formation of a rigid and resistant hair shaft through their extensive disulfide bond cross-linking with abundant cysteine residues of hair keratins. The matrix proteins include the high-sulfur and high-glycine-tyrosine keratins. This is Keratin-associated protein 10-9 (KRTAP10-9) from Homo sapiens (Human).